The following is a 222-amino-acid chain: 6,7-dimethyl-8-ribityllumazine synthase, chloroplastic (222 aa).

Residues 1 to 66 (MASFAASQTC…NRASFVVTNA (66 aa)) constitute a chloroplast transit peptide. 5-amino-6-(D-ribitylamino)uracil-binding positions include Phe89, 122-124 (AYE), and 146-148 (AVV). 151-152 (DT) is a binding site for (2S)-2-hydroxy-3-oxobutyl phosphate. His154 serves as the catalytic Proton donor. Residue Phe179 participates in 5-amino-6-(D-ribitylamino)uracil binding. Position 193 (Arg193) interacts with (2S)-2-hydroxy-3-oxobutyl phosphate.

The protein belongs to the DMRL synthase family. As to quaternary structure, oligomer forming an icosahedral capsid.

It localises to the plastid. The protein localises to the chloroplast. It carries out the reaction (2S)-2-hydroxy-3-oxobutyl phosphate + 5-amino-6-(D-ribitylamino)uracil = 6,7-dimethyl-8-(1-D-ribityl)lumazine + phosphate + 2 H2O + H(+). Its pathway is cofactor biosynthesis; riboflavin biosynthesis; riboflavin from 2-hydroxy-3-oxobutyl phosphate and 5-amino-6-(D-ribitylamino)uracil: step 1/2. Catalyzes the formation of 6,7-dimethyl-8-ribityllumazine by condensation of 5-amino-6-(D-ribitylamino)uracil with 3,4-dihydroxy-2-butanone 4-phosphate. This is the penultimate step in the biosynthesis of riboflavin. This chain is 6,7-dimethyl-8-ribityllumazine synthase, chloroplastic, found in Spinacia oleracea (Spinach).